Reading from the N-terminus, the 650-residue chain is MESGGPGNYSAAARRPLHSAQAVDVASASSFRAFEILHLHLDLRAEFGPPGPGPGSRGLSGTATLELRCLLPEGASELRLDSHSCLEVTAATLRRGQPGDQQAPAEPVPFHTQPFSHYGQALCVAFRQPCGAADRFELELTYRVGEGPGVCWLAPEQTAGKKKPFVYTQGQAVLNRAFFPCFDTPAVKCTYSALIEVPDGFTAVMSADTWEKRGPNKFFFQMSHPIPSYLIALAIGDLASAEVGPRSRVWAEPCLIEAAKEEYSGVIEEFLATGEKLFGPYVWGRYDLLFMPPSFPFGGMENPCLTFVTPCLLAGDRSLADVIIHEISHSWFGNLVTNANWGEFWLNEGFTMYAQRRISTILFGAAYTCLEAATGRALLRQHMNVSGEENPLNKLRVKIEPGVDPDDTYNETPYEKGYCFVSYLAHLVGDQDQFDKFLKAYVDEFKFQSILAEDFLEFYLEYFPELKKKGVDSIPGFEFDRWLNTPGWPPYLPDLSPGDSLMKPAEELAELWVTSEPDMQAIEAVAISTWKTYQLVYFLDKILQKSPLPPGNVKKLGETYPKISNAQNAELRLRWGQIILKNDYQEEFQKVKDFLQSQGKQKYTLPLYHAMMGGSEMARTLAKDTFAATASQLHSNVVNYVQQILAPKDS.

298-302 (GGMEN) serves as a coordination point for substrate. Residue His325 coordinates Zn(2+). The active-site Proton acceptor is Glu326. 2 residues coordinate Zn(2+): His329 and Glu348. The residue at position 446 (Lys446) is an N6-acetyllysine.

Belongs to the peptidase M1 family. As to quaternary structure, monomer. Requires Zn(2+) as cofactor.

The protein resides in the secreted. The enzyme catalyses Release of N-terminal Arg and Lys from oligopeptides when P1' is not Pro. Also acts on arylamides of Arg and Lys.. In terms of biological role, exopeptidase which selectively removes arginine and/or lysine residues from the N-terminus of several peptide substrates including Arg(0)-Leu-enkephalin, Arg(0)-Met-enkephalin and Arg(-1)-Lys(0)-somatostatin-14. Can hydrolyze leukotriene A4 (LTA-4) into leukotriene B4 (LTB-4). The sequence is that of Aminopeptidase B (Rnpep) from Mus musculus (Mouse).